A 382-amino-acid polypeptide reads, in one-letter code: Alkanesulfonate monooxygenase (382 aa).

The protein belongs to the SsuD family. As to quaternary structure, homotetramer.

It carries out the reaction an alkanesulfonate + FMNH2 + O2 = an aldehyde + FMN + sulfite + H2O + 2 H(+). Its function is as follows. Catalyzes the desulfonation of aliphatic sulfonates. This chain is Alkanesulfonate monooxygenase, found in Buttiauxella sp. (strain PNBS).